The chain runs to 500 residues: Probable cytosol aminopeptidase (500 aa).

Lys265 and Asp270 together coordinate Mn(2+). Lys277 is a catalytic residue. The Mn(2+) site is built by Asp288, Asp347, and Glu349. Residue Arg351 is part of the active site.

The protein belongs to the peptidase M17 family. Mn(2+) serves as cofactor.

The protein resides in the cytoplasm. The enzyme catalyses Release of an N-terminal amino acid, Xaa-|-Yaa-, in which Xaa is preferably Leu, but may be other amino acids including Pro although not Arg or Lys, and Yaa may be Pro. Amino acid amides and methyl esters are also readily hydrolyzed, but rates on arylamides are exceedingly low.. The catalysed reaction is Release of an N-terminal amino acid, preferentially leucine, but not glutamic or aspartic acids.. Its function is as follows. Presumably involved in the processing and regular turnover of intracellular proteins. Catalyzes the removal of unsubstituted N-terminal amino acids from various peptides. In Rickettsia felis (strain ATCC VR-1525 / URRWXCal2) (Rickettsia azadi), this protein is Probable cytosol aminopeptidase.